A 567-amino-acid chain; its full sequence is MKTLSQAQSKTSSQQFSFTGNSSANVIIGNQKLTINDVARVARNGTLVSLTNNTDILQGIQASCDYINNAVESGEPIYGVTSGFGGMANVAISREQASELQTNLVWFLKTGAGNKLPLADVRAAMLLRANSHMRGASGIRLELIKRMEIFLNAGVTPYVYEFGSIGASGDLVPLSYITGSLIGLDPSFKVDFNGKEMDAPTALRQLNLSPLTLLPKEGLAMMNGTSVMTGIAANCVYDTQILTAIAMGVHALDIQALNGTNQSFHPFIHNSKPHPGQLWAADQMISLLANSQLVRDELDGKHDYRDHELIQDRYSLRCLPQYLGPIVDGISQIAKQIEIEINSVTDNPLIDVDNQASYHGGNFLGQYVGMGMDHLRYYIGLLAKHLDVQIALLASPEFSNGLPPSLLGNRERKVNMGLKGLQICGNSIMPLLTFYGNSIADRFPTHAEQFNQNINSQGYTSATLARRSVDIFQNYVAIALMFGVQAVDLRTYKKTGHYDARACLSPATERLYSAVRHVVGQKPTSDRPYIWNDNEQGLDEHIARISADIAAGGVIVQAVQDILPCLH.

Catalysis depends on tyrosine 78, which acts as the Proton donor/acceptor. Residues 167–169 (ASG) constitute a cross-link (5-imidazolinone (Ala-Gly)). A 2,3-didehydroalanine (Ser) modification is found at serine 168. Residues asparagine 223, glutamine 311, arginine 317, asparagine 347, lysine 419, glutamate 448, and asparagine 451 each coordinate (E)-cinnamate.

It belongs to the PAL/histidase family. As to quaternary structure, homotetramer. In terms of processing, contains an active site 4-methylidene-imidazol-5-one (MIO), which is formed autocatalytically by cyclization and dehydration of residues Ala-Ser-Gly.

Its subcellular location is the cytoplasm. It catalyses the reaction L-phenylalanine = (E)-cinnamate + NH4(+). It functions in the pathway phenylpropanoid metabolism; trans-cinnamate biosynthesis; trans-cinnamate from L-phenylalanine: step 1/1. Catalyzes the non-oxidative deamination of L-phenylalanine to form trans-cinnamic acid, the first step in the phenylpropanoid pathway. In Trichormus variabilis (strain ATCC 29413 / PCC 7937) (Anabaena variabilis), this protein is Phenylalanine ammonia-lyase.